Here is a 122-residue protein sequence, read N- to C-terminus: Large ribosomal subunit protein uL14 (122 aa).

Belongs to the universal ribosomal protein uL14 family. As to quaternary structure, part of the 50S ribosomal subunit. Forms a cluster with proteins L3 and L19. In the 70S ribosome, L14 and L19 interact and together make contacts with the 16S rRNA in bridges B5 and B8.

Binds to 23S rRNA. Forms part of two intersubunit bridges in the 70S ribosome. The chain is Large ribosomal subunit protein uL14 from Vesicomyosocius okutanii subsp. Calyptogena okutanii (strain HA).